The primary structure comprises 214 residues: MRPDGPRDPVAGPDSGPEPPYPVRLSGPVIKGFGRGSKELGIPTANIPAEGLEEYPDLQVGVYYGVVALDPAKFQYQEGQGSTSTSSTGGAEAAVLPAVLSIGYNPFYKNKTKSIEIHIMPPLSSPSPTADGAGEVKFHKLPDFYGTQLKLLILGYIRPEYDYVSLEALIEDIRVDCEVARKSLQRPAYACYIDGDEKECSDVVREQRRWLVTF.

The disordered stretch occupies residues M1–S26. Mg(2+) is bound by residues T44 and N46. The Nucleophile role is filled by E116.

It belongs to the flavokinase family. The cofactor is Zn(2+). It depends on Mg(2+) as a cofactor.

The enzyme catalyses riboflavin + ATP = FMN + ADP + H(+). Its pathway is cofactor biosynthesis; FMN biosynthesis; FMN from riboflavin (ATP route): step 1/1. Its function is as follows. Catalyzes the phosphorylation of riboflavin (vitamin B2) to form flavin mononucleotide (FMN) coenzyme. The protein is Riboflavin kinase (fmn1) of Aspergillus fumigatus (strain ATCC MYA-4609 / CBS 101355 / FGSC A1100 / Af293) (Neosartorya fumigata).